Here is a 211-residue protein sequence, read N- to C-terminus: FMN-dependent NADH:quinone oxidoreductase (211 aa).

FMN contacts are provided by residues Ser-10 and 16–18; that span reads SVS.

The protein belongs to the azoreductase type 1 family. Homodimer. FMN is required as a cofactor.

It carries out the reaction 2 a quinone + NADH + H(+) = 2 a 1,4-benzosemiquinone + NAD(+). It catalyses the reaction N,N-dimethyl-1,4-phenylenediamine + anthranilate + 2 NAD(+) = 2-(4-dimethylaminophenyl)diazenylbenzoate + 2 NADH + 2 H(+). Quinone reductase that provides resistance to thiol-specific stress caused by electrophilic quinones. Functionally, also exhibits azoreductase activity. Catalyzes the reductive cleavage of the azo bond in aromatic azo compounds to the corresponding amines. The chain is FMN-dependent NADH:quinone oxidoreductase from Parafrankia sp. (strain EAN1pec).